The primary structure comprises 128 residues: Ribonuclease P protein component (128 aa).

This sequence belongs to the RnpA family. In terms of assembly, consists of a catalytic RNA component (M1 or rnpB) and a protein subunit.

The catalysed reaction is Endonucleolytic cleavage of RNA, removing 5'-extranucleotides from tRNA precursor.. In terms of biological role, RNaseP catalyzes the removal of the 5'-leader sequence from pre-tRNA to produce the mature 5'-terminus. It can also cleave other RNA substrates such as 4.5S RNA. The protein component plays an auxiliary but essential role in vivo by binding to the 5'-leader sequence and broadening the substrate specificity of the ribozyme. This chain is Ribonuclease P protein component, found in Prochlorococcus marinus (strain NATL2A).